The following is a 449-amino-acid chain: Probable D-serine dehydratase (449 aa).

The residue at position 119 (Lys-119) is an N6-(pyridoxal phosphate)lysine.

This sequence belongs to the serine/threonine dehydratase family. DsdA subfamily. Pyridoxal 5'-phosphate serves as cofactor.

The enzyme catalyses D-serine = pyruvate + NH4(+). This chain is Probable D-serine dehydratase, found in Pseudomonas putida (strain ATCC 700007 / DSM 6899 / JCM 31910 / BCRC 17059 / LMG 24140 / F1).